The primary structure comprises 233 residues: Glyceraldehyde-3-phosphate dehydrogenase A, chloroplastic (233 aa).

D-glyceraldehyde 3-phosphate-binding positions include 49–51 (SCT), Thr80, Arg95, 108–109 (TG), and Arg131. The Nucleophile role is filled by Cys50. Asn213 serves as a coordination point for NADP(+).

Belongs to the glyceraldehyde-3-phosphate dehydrogenase family. In terms of assembly, tetramer of either four A chains (GAPDH 2) or two A and two B chains (GAPDH 1).

The protein resides in the plastid. Its subcellular location is the chloroplast. It catalyses the reaction D-glyceraldehyde 3-phosphate + phosphate + NADP(+) = (2R)-3-phospho-glyceroyl phosphate + NADPH + H(+). It functions in the pathway carbohydrate biosynthesis; Calvin cycle. The sequence is that of Glyceraldehyde-3-phosphate dehydrogenase A, chloroplastic (GAPA) from Sinapis alba (White mustard).